A 116-amino-acid polypeptide reads, in one-letter code: Large ribosomal subunit protein uL22c (116 aa).

It belongs to the universal ribosomal protein uL22 family. As to quaternary structure, part of the 50S ribosomal subunit.

It localises to the plastid. The protein resides in the chloroplast. In terms of biological role, this protein binds specifically to 23S rRNA. The globular domain of the protein is located near the polypeptide exit tunnel on the outside of the subunit, while an extended beta-hairpin is found that lines the wall of the exit tunnel in the center of the 70S ribosome. This chain is Large ribosomal subunit protein uL22c (rpl22), found in Porphyra purpurea (Red seaweed).